The following is a 117-amino-acid chain: Carboxysome shell protein CcmK4 (117 aa).

The BMC domain occupies 5–91; that stretch reads AVGSLETKGF…PHENVECVLP (87 aa).

It belongs to the bacterial microcompartments protein family. CcmK subfamily. As to quaternary structure, crystallizes as a homohexamer. Interacts stably with CcmK3, forming heterohexamers that can make dodecamers. Heterohexamers have a 1:2 CcmK3:CcmK4 stoichiometry. Upon expression in E.coli forms large aggregates.

It localises to the carboxysome. In terms of biological role, a probably essential, minor shell protein of the carboxysome, a polyhedral inclusion where RuBisCO (ribulose bisphosphate carboxylase, rbcL-rbcS) is sequestered. Hexamers form sheets that form the facets of the polyhedral carboxysome. In PCC 7418 there are several CcmK paralogs with presumably functional differences. This subunit can probably make both homohexamers and heterohexamers with CcmK3. Both hexamers can also make dodecamers, formation depends on buffer conditions. This chain is Carboxysome shell protein CcmK4, found in Halothece sp. (strain PCC 7418) (Synechococcus sp. (strain PCC 7418)).